The chain runs to 91 residues: MARPTGKKFDKRRQQQNPLFKRKKFCRFTAAGVDQIDYKDTETLKDFIGENGKITPARLTGTKAHYQRQLDTAIKRARFLALLPYTDQHKA.

The protein belongs to the bacterial ribosomal protein bS18 family. As to quaternary structure, part of the 30S ribosomal subunit. Forms a tight heterodimer with protein bS6.

Binds as a heterodimer with protein bS6 to the central domain of the 16S rRNA, where it helps stabilize the platform of the 30S subunit. In Burkholderia vietnamiensis (strain G4 / LMG 22486) (Burkholderia cepacia (strain R1808)), this protein is Small ribosomal subunit protein bS18.